The sequence spans 403 residues: S-adenosylmethionine synthase (403 aa).

Residue 141 to 146 (GQGSVD) coordinates ATP.

The protein belongs to the AdoMet synthase 2 family. The cofactor is Mg(2+).

The enzyme catalyses L-methionine + ATP + H2O = S-adenosyl-L-methionine + phosphate + diphosphate. It functions in the pathway amino-acid biosynthesis; S-adenosyl-L-methionine biosynthesis; S-adenosyl-L-methionine from L-methionine: step 1/1. Catalyzes the formation of S-adenosylmethionine from methionine and ATP. The polypeptide is S-adenosylmethionine synthase (Methanococcus aeolicus (strain ATCC BAA-1280 / DSM 17508 / OCM 812 / Nankai-3)).